Here is a 701-residue protein sequence, read N- to C-terminus: Meprin A subunit beta (701 aa).

Positions 1–22 (MDLWNLSWFLFLDALLVISGLA) are cleaved as a signal peptide. A propeptide spanning residues 23-61 (TPENFDVDGGMDQDIFDINEGLGLDLFEGDIRLDRAQIR) is cleaved from the precursor. Topologically, residues 23 to 652 (TPENFDVDGG…CEKRGSTRDT (630 aa)) are extracellular. The region spanning 62 to 256 (NSIIGEKYRW…LKLNQLYNCS (195 aa)) is the Peptidase M12A domain. Cystine bridges form between Cys103/Cys255, Cys124/Cys144, and Cys265/Cys427. Residue His152 coordinates Zn(2+). Glu153 is a catalytic residue. Residues His156 and His162 each coordinate Zn(2+). N-linked (GlcNAc...) asparagine glycans are attached at residues Asn218, Asn254, Asn370, Asn421, Asn436, Asn445, Asn547, and Asn592. One can recognise an MAM domain in the interval 260-429 (SFMDSCSFEL…INLSETRCPH (170 aa)). The 156-residue stretch at 430–585 (HIWHIRNFTQ…GDDVYILLTV (156 aa)) folds into the MATH domain. The O-linked (GalNAc...) serine glycan is linked to Ser593. Residues Thr594 and Thr599 are each glycosylated (O-linked (GalNAc...) threonine). Residues 595–607 (QIQLTPAPSVQDL) form a required for proteolytic processing region. Ser603 carries an O-linked (GalNAc...) serine glycan. Residues 604-644 (VQDLCSKTTCKNDGVCTVRDGKAECRCQSGEDWWYMGERCE) enclose the EGF-like domain. 3 disulfide bridges follow: Cys608–Cys619, Cys613–Cys628, and Cys630–Cys643. The helical transmembrane segment at 653–673 (IVIAVSSTVAVFALMLIITLV) threads the bilayer. The Cytoplasmic portion of the chain corresponds to 674-701 (SVYCTRKKYRERMSSNRPNLTPQNQHAF). The residue at position 694 (Thr694) is a Phosphothreonine.

As to quaternary structure, homotetramer consisting of disulfide-linked beta subunits, or heterotetramer of two alpha and two beta subunits formed by non-covalent association of two disulfide-linked heterodimers. Interacts with MBL2 through its carbohydrate moiety. This interaction may inhibit its catalytic activity. Interacts with TSPAN8. Zn(2+) serves as cofactor. In terms of processing, phosphorylated by PKC at multiple sites of its cytoplasmic part. Phosphorylation dcreases activity at the cell surface, leading to diminished substrate cleavage. N-glycosylated; contains high mannose and/or complex biantennary structures. Post-translationally, O-glycosylation protect the C-terminal region from proteolytic cleavage and diminish secretion, this seems to be specific to human. In terms of processing, proteolytically activated by trypsin in the intestinal lumen and kallikrein-related peptidases in other tissues. As to expression, the major site of expression is the brush border membrane of small intestinal and kidney epithelial cells.

It localises to the cell membrane. The protein resides in the secreted. It catalyses the reaction Hydrolysis of proteins, including azocasein, and peptides. Hydrolysis of 5-His-|-Leu-6, 6-Leu-|-Cys-7, 14-Ala-|-Leu-15 and 19-Cys-|-Gly-20 bonds in insulin B chain.. Strongly inhibited by fetuin-A/AHSG. Membrane metallopeptidase that sheds many membrane-bound proteins. Exhibits a strong preference for acidic amino acids at the P1' position. Known substrates include: FGF19, VGFA, IL1B, IL18, procollagen I and III, E-cadherin, KLK7, gastrin, ADAM10, tenascin-C. The presence of several pro-inflammatory cytokine among substrates implicate MEP1B in inflammation. It is also involved in tissue remodeling due to its capability to degrade extracellular matrix components. Also cleaves the amyloid precursor protein/APP, thereby releasing neurotoxic amyloid beta peptides. The sequence is that of Meprin A subunit beta (MEP1B) from Homo sapiens (Human).